We begin with the raw amino-acid sequence, 343 residues long: Flagellar motor switch protein FliG (343 aa).

The short motif at 137–140 (EHPQ) is the Part of the EHPQR-motif element. The M-F-X-F motif; its intrinsic flexibility is probably coupled to flagellar rotation signature appears at 245–248 (MFTF).

It belongs to the FliG family.

It is found in the cell inner membrane. Its subcellular location is the bacterial flagellum basal body. Functionally, one of the proteins that forms a switch complex that is proposed to be located at the base of the basal body. This complex interacts with chemotaxis proteins (such as CheY) in addition to contacting components of the motor that determine the direction of flagellar rotation. Required for flagellum synthesis and motility. In H.pylori four flagellar switch proteins are encoded, FliG, FliM, FliN and FliY. This Helicobacter pylori (strain ATCC 700392 / 26695) (Campylobacter pylori) protein is Flagellar motor switch protein FliG.